A 542-amino-acid polypeptide reads, in one-letter code: Propane 2-monooxygenase, hydroxylase component large subunit (542 aa).

Fe cation is bound by residues glutamate 97, glutamate 127, histidine 130, glutamate 192, glutamate 226, and histidine 229.

This sequence belongs to the TmoA/XamoA family. As to quaternary structure, the propane 2-monooxygenase multicomponent enzyme system is composed of an electron transfer component and a monooxygenase component interacting with the effector protein MimD. The electron transfer component is composed of a reductase (MimB), and the monooxygenase component is formed by a large subunit (MimA) and a small subunit (MimC). Requires the presence of the chaperonin-like protein MimG to ensure a productive folding, resulting of a soluble MimA, which leads to the active form of MimABCD. The cofactor is Fe(2+).

The enzyme catalyses propane + NADH + O2 + H(+) = propan-2-ol + NAD(+) + H2O. The catalysed reaction is acetone + NADH + O2 + H(+) = hydroxyacetone + NAD(+) + H2O. It carries out the reaction butan-2-one + NADH + O2 + H(+) = 1-hydroxy-2-butanone + NAD(+) + H2O. It catalyses the reaction phenol + NADH + O2 + H(+) = hydroquinone + NAD(+) + H2O. Functionally, component of the propane 2-monooxygenase multicomponent enzyme system which is involved in the degradation of propane via the O2-dependent hydroxylation of propane. Also involved in the degradation of acetone via the O2-dependent hydroxylation of acetone. Also able to catalyze the oxidation of phenol, methylethylketone (2-butanone), 1-propanol and 2-propanol. This Mycolicibacterium smegmatis (strain ATCC 700084 / mc(2)155) (Mycobacterium smegmatis) protein is Propane 2-monooxygenase, hydroxylase component large subunit.